Reading from the N-terminus, the 230-residue chain is Ribonuclease 3 (230 aa).

The 124-residue stretch at 10 to 133 folds into the RNase III domain; it reads DPRLLSRIGY…IIGAIYLDSS (124 aa). Residue Glu-46 coordinates Mg(2+). Residue Asp-50 is part of the active site. Asp-119 and Glu-122 together coordinate Mg(2+). Glu-122 is a catalytic residue. The DRBM domain occupies 161–230; sequence DPKSRLQEYL…AAEILKLLEQ (70 aa).

This sequence belongs to the ribonuclease III family. In terms of assembly, homodimer. Mg(2+) serves as cofactor.

It is found in the cytoplasm. The catalysed reaction is Endonucleolytic cleavage to 5'-phosphomonoester.. Its function is as follows. Digests double-stranded RNA. Involved in the processing of primary rRNA transcript to yield the immediate precursors to the large and small rRNAs (23S and 16S). Processes some mRNAs, and tRNAs when they are encoded in the rRNA operon. Processes pre-crRNA and tracrRNA of type II CRISPR loci if present in the organism. This is Ribonuclease 3 from Acinetobacter baumannii (strain SDF).